Consider the following 334-residue polypeptide: Adenine deaminase (334 aa).

Zn(2+)-binding residues include His-17, His-19, and His-197. Glu-200 (proton donor) is an active-site residue. Asp-278 is a Zn(2+) binding site. Asp-279 contributes to the substrate binding site.

Belongs to the metallo-dependent hydrolases superfamily. Adenosine and AMP deaminases family. Adenine deaminase type 2 subfamily. It depends on Zn(2+) as a cofactor.

It catalyses the reaction adenine + H2O + H(+) = hypoxanthine + NH4(+). In terms of biological role, catalyzes the hydrolytic deamination of adenine to hypoxanthine. Plays an important role in the purine salvage pathway and in nitrogen catabolism. The chain is Adenine deaminase from Rhodospirillum rubrum (strain ATCC 11170 / ATH 1.1.1 / DSM 467 / LMG 4362 / NCIMB 8255 / S1).